Here is a 274-residue protein sequence, read N- to C-terminus: Cytochrome b-c1 complex subunit Rieske, mitochondrial (274 aa).

Over 79-103 (SHTDIKVPDFSEYRRLEVLDSTKSS) the chain is Mitochondrial matrix. Residues 104–140 (RESSEARKGFSYLVTGVTTVGVAYAAKNAVTQFVSSM) traverse the membrane as a helical segment. Residues 141–274 (SASADVLALA…FTSDDMVIVG (134 aa)) lie on the Mitochondrial intermembrane side of the membrane. One can recognise a Rieske domain in the interval 187 to 272 (EAAVELSQLR…YEFTSDDMVI (86 aa)). The [2Fe-2S] cluster site is built by Cys217, His219, Cys236, His239, and Ser241. A disulfide bridge links Cys222 with Cys238.

This sequence belongs to the Rieske iron-sulfur protein family. As to quaternary structure, component of the ubiquinol-cytochrome c oxidoreductase (cytochrome b-c1 complex, complex III, CIII), a multisubunit enzyme composed of 11 subunits. The complex is composed of 3 respiratory subunits cytochrome b, cytochrome c1 and Rieske protein UQCRFS1, 2 core protein subunits UQCRC1/QCR1 and UQCRC2/QCR2, and 6 low-molecular weight protein subunits UQCRH/QCR6, UQCRB/QCR7, UQCRQ/QCR8, UQCR10/QCR9, UQCR11/QCR10 and subunit 9, the cleavage product of Rieske protein UQCRFS1. The complex exists as an obligatory dimer and forms supercomplexes (SCs) in the inner mitochondrial membrane with NADH-ubiquinone oxidoreductase (complex I, CI) and cytochrome c oxidase (complex IV, CIV), resulting in different assemblies (supercomplex SCI(1)III(2)IV(1) and megacomplex MCI(2)III(2)IV(2)). Incorporation of the Rieske protein UQCRFS1 is the penultimate step in complex III assembly. Interacts with TTC19, which is involved in the clearance of UQCRFS1 fragments. In terms of assembly, component of the ubiquinol-cytochrome c oxidoreductase (cytochrome b-c1 complex, complex III, CIII). Subunit 9 corresponds to the mitochondrial targeting sequence (MTS) of Rieske protein UQCRFS1. It is retained after processing and incorporated inside complex III, where it remains bound to the complex and localizes between the 2 core subunits UQCRC1/QCR1 and UQCRC2/QCR2. [2Fe-2S] cluster serves as cofactor. Post-translationally, proteolytic processing is necessary for the correct insertion of UQCRFS1 in the complex III dimer. Several fragments are generated during UQCRFS1 insertion, most probably due to the endogenous matrix-processing peptidase (MPP) activity of the 2 core protein subunits UQCRC1/QCR1 and UQCRC2/QCR2, which are homologous to the 2 mitochondrial-processing peptidase (MPP) subunits beta-MPP and alpha-MPP respectively. The action of the protease is also necessary for the clearance of the UQCRFS1 fragments.

The protein resides in the mitochondrion inner membrane. The enzyme catalyses a quinol + 2 Fe(III)-[cytochrome c](out) = a quinone + 2 Fe(II)-[cytochrome c](out) + 2 H(+)(out). Component of the ubiquinol-cytochrome c oxidoreductase, a multisubunit transmembrane complex that is part of the mitochondrial electron transport chain which drives oxidative phosphorylation. The respiratory chain contains 3 multisubunit complexes succinate dehydrogenase (complex II, CII), ubiquinol-cytochrome c oxidoreductase (cytochrome b-c1 complex, complex III, CIII) and cytochrome c oxidase (complex IV, CIV), that cooperate to transfer electrons derived from NADH and succinate to molecular oxygen, creating an electrochemical gradient over the inner membrane that drives transmembrane transport and the ATP synthase. The cytochrome b-c1 complex catalyzes electron transfer from ubiquinol to cytochrome c, linking this redox reaction to translocation of protons across the mitochondrial inner membrane, with protons being carried across the membrane as hydrogens on the quinol. In the process called Q cycle, 2 protons are consumed from the matrix, 4 protons are released into the intermembrane space and 2 electrons are passed to cytochrome c. The Rieske protein is a catalytic core subunit containing a [2Fe-2S] iron-sulfur cluster. It cycles between 2 conformational states during catalysis to transfer electrons from the quinol bound in the Q(0) site in cytochrome b to cytochrome c1. Incorporation of UQCRFS1 is the penultimate step in complex III assembly. Functionally, component of the ubiquinol-cytochrome c oxidoreductase (cytochrome b-c1 complex, complex III, CIII). UQCRFS1 undergoes proteolytic processing once it is incorporated in the complex III dimer. One of the fragments, called subunit 9, corresponds to its mitochondrial targeting sequence (MTS). The proteolytic processing is necessary for the correct insertion of UQCRFS1 in the complex III dimer, but the persistence of UQCRFS1-derived fragments may prevent newly imported UQCRFS1 to be processed and assembled into complex III and is detrimental for the complex III structure and function. The chain is Cytochrome b-c1 complex subunit Rieske, mitochondrial (UQCRFS1) from Gorilla gorilla gorilla (Western lowland gorilla).